The chain runs to 100 residues: Small ribosomal subunit protein uS14c (100 aa).

It belongs to the universal ribosomal protein uS14 family. Part of the 30S ribosomal subunit.

It localises to the plastid. The protein localises to the chloroplast. In terms of biological role, binds 16S rRNA, required for the assembly of 30S particles. This Lactuca sativa (Garden lettuce) protein is Small ribosomal subunit protein uS14c.